Reading from the N-terminus, the 441-residue chain is Peroxisomal multifunctional enzyme A (441 aa).

The tract at residues 1-302 (MALNFKDKVV…VNSKPADGES (302 aa)) is 3-hydroxyacyl-CoA dehydrogenase. NAD(+) contacts are provided by residues 11–35 (IVTGAGGGIGKVYALEFAKRGAKVV), Ile-19, Asp-38, 73–74 (SV), and Asn-97. Ser-149 provides a ligand contact to substrate. Catalysis depends on Tyr-162, which acts as the Proton acceptor. NAD(+) is bound by residues 162–166 (YGSMK) and 194–197 (AASR). The region spanning 331 to 440 (ASKIFTTIQG…KLGALMQGSK (110 aa)) is the SCP2 domain. Gln-412 provides a ligand contact to substrate.

This sequence belongs to the short-chain dehydrogenases/reductases (SDR) family.

The protein resides in the peroxisome. The catalysed reaction is a (3S)-3-hydroxyacyl-CoA + NAD(+) = a 3-oxoacyl-CoA + NADH + H(+). It participates in lipid metabolism; fatty acid beta-oxidation. In terms of biological role, enzyme acting on the peroxisomal beta-oxidation pathway for fatty acids. Protects the cells from the increase of the harmful xenobiotic fatty acids incorporated from their diets and optimizes cellular lipid composition for proper development. The chain is Peroxisomal multifunctional enzyme A (mfeA) from Dictyostelium discoideum (Social amoeba).